The sequence spans 1016 residues: MGKQRRTMISFTLFLTLTMMSSLINGDTDSIQLNDDVLGLIVFKSDLNDPFSHLESWTEDDNTPCSWSYVKCNPKTSRVIELSLDGLALTGKINRGIQKLQRLKVLSLSNNNFTGNINALSNNNHLQKLDLSHNNLSGQIPSSLGSITSLQHLDLTGNSFSGTLSDDLFNNCSSLRYLSLSHNHLEGQIPSTLFRCSVLNSLNLSRNRFSGNPSFVSGIWRLERLRALDLSSNSLSGSIPLGILSLHNLKELQLQRNQFSGALPSDIGLCPHLNRVDLSSNHFSGELPRTLQKLKSLNHFDVSNNLLSGDFPPWIGDMTGLVHLDFSSNELTGKLPSSISNLRSLKDLNLSENKLSGEVPESLESCKELMIVQLKGNDFSGNIPDGFFDLGLQEMDFSGNGLTGSIPRGSSRLFESLIRLDLSHNSLTGSIPGEVGLFIHMRYLNLSWNHFNTRVPPEIEFLQNLTVLDLRNSALIGSVPADICESQSLQILQLDGNSLTGSIPEGIGNCSSLKLLSLSHNNLTGPIPKSLSNLQELKILKLEANKLSGEIPKELGDLQNLLLVNVSFNRLIGRLPLGDVFQSLDQSAIQGNLGICSPLLRGPCTLNVPKPLVINPNSYGNGNNMPGNRASGGSGTFHRRMFLSVSVIVAISAAILIFSGVIIITLLNASVRRRLAFVDNALESIFSGSSKSGRSLMMGKLVLLNSRTSRSSSSSQEFERNPESLLNKASRIGEGVFGTVYKAPLGEQGRNLAVKKLVPSPILQNLEDFDREVRILAKAKHPNLVSIKGYFWTPDLHLLVSEYIPNGNLQSKLHEREPSTPPLSWDVRYKIILGTAKGLAYLHHTFRPTTIHFNLKPTNILLDEKNNPKISDFGLSRLLTTQDGNTMNNNRFQNALGYVAPELECQNLRVNEKCDVYGFGVLILELVTGRRPVEYGEDSFVILSDHVRVMLEQGNVLECIDPVMEEQYSEDEVLPVLKLALVCTSQIPSNRPTMAEIVQILQVINSPVPHRIMDSF.

The first 26 residues, 1 to 26, serve as a signal peptide directing secretion; the sequence is MGKQRRTMISFTLFLTLTMMSSLING. Residues 27–646 lie on the Extracellular side of the membrane; the sequence is DTDSIQLNDD…FHRRMFLSVS (620 aa). LRR repeat units follow at residues 102–124, 125–147, 149–171, 174–196, 198–219, 224–245, 248–270, 272–295, 296–318, 320–342, 344–366, 368–390, 391–413, 416–438, 440–462, 464–486, 488–510, 512–535, 536–559, and 560–582; these read RLKV…SNNN, HLQK…LGSI, SLQH…LFNN, SLRY…LFRC, VLNS…VSGI, RLRA…GILS, NLKE…IGLC, HLNR…QKLK, SLNH…IGDM, GLVH…ISNL, SLKD…LESC, ELMI…FFDL, GLQE…SSRL, SLIR…VGLF, HMRY…IEFL, NLTV…ICES, SLQI…IGNC, SLKL…SNLQ, ELKI…GDLQ, and NLLL…DVFQ. Residues Asn-112, Asn-135, and Asn-171 are each glycosylated (N-linked (GlcNAc...) asparagine). Asn-203 carries an N-linked (GlcNAc...) asparagine glycan. N-linked (GlcNAc...) asparagine glycosylation occurs at Asn-349. N-linked (GlcNAc...) asparagine glycosylation is found at Asn-445, Asn-464, Asn-509, and Asn-522. N-linked (GlcNAc...) asparagine glycosylation is present at Asn-565. Residues 647 to 667 traverse the membrane as a helical segment; sequence VIVAISAAILIFSGVIIITLL. Residues 668–1016 are Cytoplasmic-facing; sequence NASVRRRLAF…PVPHRIMDSF (349 aa). Residues 726-1013 enclose the Protein kinase domain; the sequence is LNKASRIGEG…INSPVPHRIM (288 aa). ATP is bound by residues 732 to 740 and Lys-755; that span reads IGEGVFGTV. Residues Tyr-841 and Tyr-898 each carry the phosphotyrosine modification.

It belongs to the protein kinase superfamily. Ser/Thr protein kinase family.

The protein localises to the membrane. The polypeptide is Probably inactive leucine-rich repeat receptor-like protein kinase At3g28040 (Arabidopsis thaliana (Mouse-ear cress)).